Here is a 796-residue protein sequence, read N- to C-terminus: Merozoite surface protein P92 (796 aa).

A signal peptide spans 1–26 (MFAVNLKICIFLSLVSFLLQCKNTLA). Asparagine 27, asparagine 37, asparagine 65, asparagine 71, asparagine 168, asparagine 240, asparagine 275, asparagine 359, asparagine 502, asparagine 511, asparagine 607, asparagine 633, asparagine 728, and asparagine 765 each carry an N-linked (GlcNAc...) asparagine glycan. One can recognise a 6-Cys domain in the interval 571 to 720 (KYEGIDLTDS…NSIKQEINKK (150 aa)). 2 disulfide bridges follow: cysteine 614–cysteine 691 and cysteine 625–cysteine 689.

As to quaternary structure, interacts with host complement factor CFH isoform 1 (via sushi 4-6 domains) and CFH isoform FHL-1 (via sushi 4-6 domains); this interaction recruits CFH onto the merozoite surface preventing complement-mediated cell lysis. The interaction does not affect CFH activity.

The protein localises to the cell surface. Its subcellular location is the cell membrane. During the asexual blood stage, recruits host complement factor H CFH to the surface of merozoites resulting in the down-regulation of the host complement alternative pathway and thus, protecting merozoites from complement-mediated lysis. In Plasmodium falciparum (isolate 3D7), this protein is Merozoite surface protein P92.